Consider the following 354-residue polypeptide: Probable calcium-binding protein CML50 (354 aa).

Composition is skewed to low complexity over residues 1 to 10 and 28 to 71; these read MSGYPPTSQG and YSSG…SSYG. The segment at 1–159 is disordered; that stretch reads MSGYPPTSQG…PASSGHGGGY (159 aa). Pro residues predominate over residues 72–81; sequence APPPSAPYAP. Over residues 106-117 the composition is skewed to low complexity; the sequence is GSSDYGSYGAGP. EF-hand domains lie at 183-218 and 249-284; these read GTDP…YQQR and YSLQ…LGFS. D196, D198, S200, E207, D262, D264, S266, R268, and E273 together coordinate Ca(2+).

In terms of biological role, potential calcium sensor. This chain is Probable calcium-binding protein CML50 (CML50), found in Arabidopsis thaliana (Mouse-ear cress).